A 275-amino-acid polypeptide reads, in one-letter code: Phosphate import ATP-binding protein PstB 1 (275 aa).

Residues 22–261 (LETQAVSVYY…NRTEKIFNSP (240 aa)) enclose the ABC transporter domain. 54-61 (GPSGCGKS) lines the ATP pocket.

Belongs to the ABC transporter superfamily. Phosphate importer (TC 3.A.1.7) family. The complex is composed of two ATP-binding proteins (PstB), two transmembrane proteins (PstC and PstA) and a solute-binding protein (PstS).

Its subcellular location is the cell inner membrane. It carries out the reaction phosphate(out) + ATP + H2O = ADP + 2 phosphate(in) + H(+). In terms of biological role, part of the ABC transporter complex PstSACB involved in phosphate import. Responsible for energy coupling to the transport system. This is Phosphate import ATP-binding protein PstB 1 from Synechococcus sp. (strain JA-2-3B'a(2-13)) (Cyanobacteria bacterium Yellowstone B-Prime).